Here is a 336-residue protein sequence, read N- to C-terminus: Urokinase plasminogen activator surface receptor (336 aa).

The signal sequence occupies residues 1 to 23 (MGHPLLLPLLLLLLHTGVPASWG). UPAR/Ly6 domains are found at residues 24-111 (LRCM…VTFP), 116-208 (LECI…LSLA), and 215-302 (HRCY…EDIQ). Intrachain disulfides connect cysteine 26/cysteine 47, cysteine 29/cysteine 35, and cysteine 40/cysteine 68. N-linked (GlcNAc...) asparagine glycosylation occurs at asparagine 75. Intrachain disulfides connect cysteine 94–cysteine 99, cysteine 118–cysteine 145, cysteine 121–cysteine 128, cysteine 138–cysteine 170, cysteine 176–cysteine 193, cysteine 194–cysteine 199, cysteine 217–cysteine 245, cysteine 220–cysteine 228, cysteine 238–cysteine 264, cysteine 270–cysteine 288, and cysteine 289–cysteine 294. 2 N-linked (GlcNAc...) asparagine glycosylation sites follow: asparagine 195 and asparagine 223.

In terms of assembly, monomer. Interacts (via the UPAR/Ly6 domains) with SRPX2. Interacts with MRC2. Interacts with FAP (seprase); the interaction occurs at the cell surface of invadopodia membrane. Interacts with SORL1 (via N-terminal ectodomain); this interaction decreases PLAUR internalization. The ternary complex composed of PLAUR-PLAU-SERPINE1 also interacts with SORL1.

Its subcellular location is the cell membrane. The protein resides in the cell projection. The protein localises to the invadopodium membrane. In terms of biological role, acts as a receptor for urokinase plasminogen activator. Plays a role in localizing and promoting plasmin formation. Mediates the proteolysis-independent signal transduction activation effects of U-PA. It is subject to negative-feedback regulation by U-PA which cleaves it into an inactive form. The protein is Urokinase plasminogen activator surface receptor (PLAUR) of Aotus trivirgatus (Three-striped night monkey).